The primary structure comprises 345 residues: Ephrin-B1 (345 aa).

The N-terminal stretch at 1-24 is a signal peptide; sequence MARPGQRWLSKWLVAMVVLTLCRL. At 25 to 236 the chain is on the extracellular side; it reads ATPLAKNLEP…GDSDSFFNSK (212 aa). The region spanning 30-164 is the Ephrin RBD domain; sequence KNLEPVSWSS…TRTMKIVMKV (135 aa). Cystine bridges form between cysteine 64–cysteine 101 and cysteine 89–cysteine 153. Residue asparagine 139 is glycosylated (N-linked (GlcNAc...) asparagine). A disordered region spans residues 169–227; it reads NAVTPEQLTTSRPSKESDNTVKTATQAPGRGSQGDSDGKHETVNQEEKSGPGAGGGGSG. Residues 204–217 are compositionally biased toward basic and acidic residues; sequence SDGKHETVNQEEKS. The helical transmembrane segment at 237–257 threads the bilayer; that stretch reads VALFAAVGAGCVIFLLIIIFL. Residues 258–345 lie on the Cytoplasmic side of the membrane; the sequence is TVLLLKLRKR…QSPANIYYKV (88 aa). The Nuclear localization signal signature appears at 259–272; sequence VLLLKLRKRHRKHT. The interaction with ZHX2 stretch occupies residues 262–293; that stretch reads LKLRKRHRKHTQQRAAALSLSTLASPKGGSGT. A phosphoserine mark is found at serine 280 and serine 286. Positions 343 to 345 match the PDZ-binding motif; sequence YKV.

This sequence belongs to the ephrin family. Interacts (via PDZ-binding motif) with GRIP1 and GRIP2 (via PDZ domain 6). Interacts with TLE1. The intracellular domain peptide interacts with ZHX2; the interaction enhances ZHX2 transcriptional repression activity. Inducible phosphorylation of tyrosine residues in the cytoplasmic domain. Post-translationally, proteolytically processed. The ectodomain is cleaved, probably by a metalloprotease, to produce a membrane-tethered C-terminal fragment. This fragment is then further processed by the gamma-secretase complex to yield a soluble intracellular domain peptide which can translocate to the nucleus. The intracellular domain peptide is highly labile suggesting that it is targeted for degradation by the proteasome. As to expression, expressed on lateral floor plate cells, specifically on commissural axon segments that have passed through the floor plate. Expressed in cells of the retinal ganglion cell layer during retinal axon guidance to the optic disk. Expressed in myogenic progenitor cells.

The protein resides in the cell membrane. It is found in the membrane raft. The protein localises to the nucleus. Functionally, cell surface transmembrane ligand for Eph receptors, a family of receptor tyrosine kinases which are crucial for migration, repulsion and adhesion during neuronal, vascular and epithelial development. Binding to Eph receptors residing on adjacent cells leads to contact-dependent bidirectional signaling into neighboring cells. Shows high affinity for the receptor tyrosine kinase EPHB1/ELK. Can also bind EPHB2 and EPHB3. Binds to, and induces the collapse of, commissural axons/growth cones in vitro. May play a role in constraining the orientation of longitudinally projecting axons. The protein is Ephrin-B1 (Efnb1) of Mus musculus (Mouse).